The sequence spans 148 residues: Large-conductance mechanosensitive channel (148 aa).

A run of 2 helical transmembrane segments spans residues 15–35 (LDMA…KSLV) and 84–104 (VGVF…VFLL).

The protein belongs to the MscL family. In terms of assembly, homopentamer.

It is found in the cell inner membrane. In terms of biological role, channel that opens in response to stretch forces in the membrane lipid bilayer. May participate in the regulation of osmotic pressure changes within the cell. The protein is Large-conductance mechanosensitive channel of Nitratidesulfovibrio vulgaris (strain DSM 19637 / Miyazaki F) (Desulfovibrio vulgaris).